We begin with the raw amino-acid sequence, 387 residues long: Proteinase R (387 aa).

Residues 1 to 21 (MRLSILLGLLPLAPRPPAVDA) form the signal peptide. The propeptide occupies 22–108 (VEQRSEPAPL…IEQDAIVNIN (87 aa)). The Inhibitor I9 domain occupies 42–107 (KYIVKLKEGS…YIEQDAIVNI (66 aa)). Residues 115 to 387 (PWGLARISST…NLLAYNNYQG (273 aa)) enclose the Peptidase S8 domain. Thr-124 serves as a coordination point for Ca(2+). Cystine bridges form between Cys-142–Cys-231 and Cys-286–Cys-357. Active-site charge relay system residues include Asp-147 and His-177. Asp-308 is a binding site for Ca(2+). Ser-332 (charge relay system) is an active-site residue. Residue Asp-368 coordinates Ca(2+).

Belongs to the peptidase S8 family. The cofactor is Ca(2+).

Functionally, serine proteinase. This Parengyodontium album (Tritirachium album) protein is Proteinase R (PROR).